Here is a 177-residue protein sequence, read N- to C-terminus: MSEFITVARPYAKAAFDFAVEHQSVERWQDMLAFAAEVTKNEQMAELLSGALAPETLAESFIAVCGEQLDENGQNLIRVMAENGRLKALPDVLEQFIHLRAVSEATAEVDVISAAALSEQQLAKISAAMEKRLSRKVKLNCKIDKSVMAGVIIRAGDMVIDGSVRGRLERLADVLQS.

It belongs to the ATPase delta chain family. As to quaternary structure, F-type ATPases have 2 components, F(1) - the catalytic core - and F(0) - the membrane proton channel. F(1) has five subunits: alpha(3), beta(3), gamma(1), delta(1), epsilon(1). F(0) has three main subunits: a(1), b(2) and c(10-14). The alpha and beta chains form an alternating ring which encloses part of the gamma chain. F(1) is attached to F(0) by a central stalk formed by the gamma and epsilon chains, while a peripheral stalk is formed by the delta and b chains.

The protein resides in the cell inner membrane. In terms of biological role, f(1)F(0) ATP synthase produces ATP from ADP in the presence of a proton or sodium gradient. F-type ATPases consist of two structural domains, F(1) containing the extramembraneous catalytic core and F(0) containing the membrane proton channel, linked together by a central stalk and a peripheral stalk. During catalysis, ATP synthesis in the catalytic domain of F(1) is coupled via a rotary mechanism of the central stalk subunits to proton translocation. This protein is part of the stalk that links CF(0) to CF(1). It either transmits conformational changes from CF(0) to CF(1) or is implicated in proton conduction. This is ATP synthase subunit delta from Escherichia coli O81 (strain ED1a).